The sequence spans 170 residues: Adenine phosphoribosyltransferase (170 aa).

It belongs to the purine/pyrimidine phosphoribosyltransferase family. Homodimer.

It localises to the cytoplasm. The catalysed reaction is AMP + diphosphate = 5-phospho-alpha-D-ribose 1-diphosphate + adenine. It participates in purine metabolism; AMP biosynthesis via salvage pathway; AMP from adenine: step 1/1. Functionally, catalyzes a salvage reaction resulting in the formation of AMP, that is energically less costly than de novo synthesis. The sequence is that of Adenine phosphoribosyltransferase from Thermotoga petrophila (strain ATCC BAA-488 / DSM 13995 / JCM 10881 / RKU-1).